Consider the following 401-residue polypeptide: Probable 2,3-bisphosphoglycerate-independent phosphoglycerate mutase (401 aa).

It belongs to the BPG-independent phosphoglycerate mutase family. A-PGAM subfamily.

It carries out the reaction (2R)-2-phosphoglycerate = (2R)-3-phosphoglycerate. It participates in carbohydrate degradation; glycolysis; pyruvate from D-glyceraldehyde 3-phosphate: step 3/5. Catalyzes the interconversion of 2-phosphoglycerate and 3-phosphoglycerate. The chain is Probable 2,3-bisphosphoglycerate-independent phosphoglycerate mutase from Thermotoga sp. (strain RQ2).